The following is a 234-amino-acid chain: Ribosomal RNA small subunit methyltransferase G (234 aa).

S-adenosyl-L-methionine is bound by residues Gly96, Leu101, 119–121 (DAT), 147–148 (VE), and Arg161.

It belongs to the methyltransferase superfamily. RNA methyltransferase RsmG family.

It is found in the cytoplasm. Specifically methylates the N7 position of a guanine in 16S rRNA. The sequence is that of Ribosomal RNA small subunit methyltransferase G from Chlorobium chlorochromatii (strain CaD3).